Consider the following 293-residue polypeptide: Elongation factor Ts (293 aa).

The segment at 80–83 (TDFV) is involved in Mg(2+) ion dislocation from EF-Tu.

This sequence belongs to the EF-Ts family.

It is found in the cytoplasm. Associates with the EF-Tu.GDP complex and induces the exchange of GDP to GTP. It remains bound to the aminoacyl-tRNA.EF-Tu.GTP complex up to the GTP hydrolysis stage on the ribosome. The polypeptide is Elongation factor Ts (Staphylococcus aureus (strain Newman)).